The sequence spans 354 residues: AT-hook motif nuclear-localized protein 11 (354 aa).

2 disordered regions span residues 1-158 (MDRR…MMPS) and 290-354 (KREE…LMRG). 2 stretches are compositionally biased toward low complexity: residues 46–55 (NSISPFGSNP) and 75–96 (VDSSPADSSAAAAGALVAPPSG). The Bipartite nuclear localization signal signature appears at 101–109 (KRKRGRPRK). The segment at residues 101–113 (KRKRGRPRKYGQD) is a DNA-binding region (a.T hook 1). Over residues 122 to 133 (SPSISNVSPNSN) the composition is skewed to low complexity. A DNA-binding region (a.T hook 2) is located at residues 134–146 (KRGRGRPPGSGKK). Residues 159 to 302 (STGMSFTPHV…ETSEDVQDTD (144 aa)) form the PPC domain. Positions 294 to 303 (TSEDVQDTDA) are enriched in acidic residues. The segment covering 304-327 (LENNNDNTAATSPPVPQQSQNIVQ) has biased composition (polar residues). The span at 340–354 (MDMHHPHMDIDLMRG) shows a compositional bias: basic and acidic residues.

The protein localises to the nucleus. Its function is as follows. Transcription factor that specifically binds AT-rich DNA sequences related to the nuclear matrix attachment regions (MARs). In Arabidopsis thaliana (Mouse-ear cress), this protein is AT-hook motif nuclear-localized protein 11.